The primary structure comprises 766 residues: Protein transport protein Sec23B (766 aa).

Ala-2 is subject to N-acetylalanine. Zn(2+) is bound by residues Cys-61, Cys-66, Cys-85, and Cys-88. Lys-564 bears the N6-acetyllysine mark. The Gelsolin-like repeat unit spans residues 633–719 (PEPVLLDSSS…EHGGSQARFL (87 aa)).

It belongs to the SEC23/SEC24 family. SEC23 subfamily. In terms of assembly, COPII is composed of at least five proteins: the Sec23/24 complex, the Sec13/31 complex and Sar1. Interacts with SAR1A.

The protein resides in the cytoplasmic vesicle. It is found in the COPII-coated vesicle membrane. It localises to the endoplasmic reticulum membrane. The protein localises to the cytoplasm. Its subcellular location is the cytosol. In terms of biological role, component of the coat protein complex II (COPII) which promotes the formation of transport vesicles from the endoplasmic reticulum (ER). The coat has two main functions, the physical deformation of the endoplasmic reticulum membrane into vesicles and the selection of cargo molecules for their transport to the Golgi complex. This chain is Protein transport protein Sec23B, found in Pongo abelii (Sumatran orangutan).